Here is a 764-residue protein sequence, read N- to C-terminus: Hemocyte protein-glutamine gamma-glutamyltransferase (764 aa).

Active-site residues include Cys343, His402, and Asp425. Residues Asn465, Asp467, Glu522, and Glu527 each coordinate Ca(2+).

It belongs to the transglutaminase superfamily. Transglutaminase family. Ca(2+) serves as cofactor. As to expression, mainly expressed in hemocytes, hepatopancreas, and gastric tissues. On the other hand nothing was detected in the heart, intestine and muscle.

It is found in the membrane. The enzyme catalyses L-glutaminyl-[protein] + L-lysyl-[protein] = [protein]-L-lysyl-N(6)-5-L-glutamyl-[protein] + NH4(+). Functionally, catalyzes the cross-linking of proteins and the conjugation of polyamines to proteins. This is Hemocyte protein-glutamine gamma-glutamyltransferase from Tachypleus tridentatus (Japanese horseshoe crab).